Here is a 394-residue protein sequence, read N- to C-terminus: 1-deoxy-D-xylulose 5-phosphate reductoisomerase (394 aa).

6 residues coordinate NADPH: Thr14, Gly15, Ser16, Ile17, Gly40, and Asn128. A 1-deoxy-D-xylulose 5-phosphate-binding site is contributed by Lys129. Glu130 contributes to the NADPH binding site. Asp154 contributes to the Mn(2+) binding site. 4 residues coordinate 1-deoxy-D-xylulose 5-phosphate: Ser155, Glu156, Ser180, and His203. Position 156 (Glu156) interacts with Mn(2+). Gly209 lines the NADPH pocket. Ser216, Asn221, Lys222, and Glu225 together coordinate 1-deoxy-D-xylulose 5-phosphate. Glu225 provides a ligand contact to Mn(2+).

This sequence belongs to the DXR family. Mg(2+) serves as cofactor. It depends on Mn(2+) as a cofactor.

It carries out the reaction 2-C-methyl-D-erythritol 4-phosphate + NADP(+) = 1-deoxy-D-xylulose 5-phosphate + NADPH + H(+). The protein operates within isoprenoid biosynthesis; isopentenyl diphosphate biosynthesis via DXP pathway; isopentenyl diphosphate from 1-deoxy-D-xylulose 5-phosphate: step 1/6. Its function is as follows. Catalyzes the NADPH-dependent rearrangement and reduction of 1-deoxy-D-xylulose-5-phosphate (DXP) to 2-C-methyl-D-erythritol 4-phosphate (MEP). The sequence is that of 1-deoxy-D-xylulose 5-phosphate reductoisomerase from Xylella fastidiosa (strain M23).